We begin with the raw amino-acid sequence, 251 residues long: Flap endonuclease Xni (251 aa).

D104 serves as a coordination point for Mg(2+). Residues 160–250 (VQPQQLPDYW…DGNLQQLRLK (91 aa)) form the 5'-3' exonuclease domain. 5 residues coordinate K(+): L171, A172, P180, V182, and I185. The interval 184 to 189 (GIGPKS) is interaction with DNA.

The protein belongs to the Xni family. The cofactor is Mg(2+). Requires K(+) as cofactor.

Has flap endonuclease activity. During DNA replication, flap endonucleases cleave the 5'-overhanging flap structure that is generated by displacement synthesis when DNA polymerase encounters the 5'-end of a downstream Okazaki fragment. This Escherichia fergusonii (strain ATCC 35469 / DSM 13698 / CCUG 18766 / IAM 14443 / JCM 21226 / LMG 7866 / NBRC 102419 / NCTC 12128 / CDC 0568-73) protein is Flap endonuclease Xni.